The following is a 92-amino-acid chain: Putative regulatory protein CKL_1364 (92 aa).

It belongs to the RemA family.

This is Putative regulatory protein CKL_1364 from Clostridium kluyveri (strain ATCC 8527 / DSM 555 / NBRC 12016 / NCIMB 10680 / K1).